The chain runs to 70 residues: Small ribosomal subunit protein bS21C (70 aa).

The tract at residues 38-70 is disordered; the sequence is YEKPTTERKRKKAAAVARLRKQVRRSMPPKKKY. The segment covering 45–70 has biased composition (basic residues); sequence RKRKKAAAVARLRKQVRRSMPPKKKY.

Belongs to the bacterial ribosomal protein bS21 family.

The chain is Small ribosomal subunit protein bS21C from Burkholderia thailandensis (strain ATCC 700388 / DSM 13276 / CCUG 48851 / CIP 106301 / E264).